Reading from the N-terminus, the 88-residue chain is UPF0297 protein str1959 (88 aa).

This sequence belongs to the UPF0297 family.

This chain is UPF0297 protein str1959, found in Streptococcus thermophilus (strain CNRZ 1066).